The following is a 1224-amino-acid chain: ATP-dependent helicase/deoxyribonuclease subunit B (1224 aa).

Positions 1–326 (MSLRFILGRA…VCAAANRRSE (326 aa)) constitute a UvrD-like helicase ATP-binding domain. Position 8-15 (8-15 (GRAGTGKS)) interacts with ATP. Residues 283 to 584 (QSAPRFQHPE…KLSLIPPELD (302 aa)) enclose the UvrD-like helicase C-terminal domain. Positions 841, 1176, 1179, and 1185 each coordinate [4Fe-4S] cluster.

This sequence belongs to the helicase family. AddB/RexB type 1 subfamily. In terms of assembly, heterodimer of AddA and AddB. Mg(2+) is required as a cofactor. [4Fe-4S] cluster serves as cofactor.

Its function is as follows. The heterodimer acts as both an ATP-dependent DNA helicase and an ATP-dependent, dual-direction single-stranded exonuclease. Recognizes the chi site generating a DNA molecule suitable for the initiation of homologous recombination. The AddB subunit has 5' -&gt; 3' nuclease activity but not helicase activity. This chain is ATP-dependent helicase/deoxyribonuclease subunit B, found in Heliobacterium modesticaldum (strain ATCC 51547 / Ice1).